A 143-amino-acid polypeptide reads, in one-letter code: Antiholin-like protein LrgA (143 aa).

4 helical membrane passes run 6–26, 30–50, 61–81, and 97–117; these read VYSF…SNII, LPIP…LLCL, LGTA…ISVI, and VIVV…QFIL.

This sequence belongs to the CidA/LrgA family. LrgA subfamily.

It localises to the cell membrane. Inhibits the expression or activity of extracellular murein hydrolases by interacting, possibly with LrgB, with the holin-like protein CidA. The LrgAB and CidA proteins may affect the proton motive force of the membrane. May be involved in programmed cell death (PCD), possibly triggering PCD in response to antibiotics and environmental stresses. This chain is Antiholin-like protein LrgA, found in Bacillus cereus (strain AH820).